Here is a 4599-residue protein sequence, read N- to C-terminus: MSEFLLALLTLSGLLPIARVLTVGADRDQQLCDPGEFLCHDHVTCVSQSWLCDGDPDCPDDSDESLDTCPEEVEIKCPLNHIACLGTNKCVHLSQLCNGVLDCPDGYDEGVHCQELLSNCQQLNCQYKCTMVRNSTRCYCEDGFEITEDGRSCKDQDECAVYGTCSQTCRNTHGSYTCSCVEGYLMQPDNRSCKAKIEPTDRPPILLIANFETIEVFYLNGSKMATLSSVNGNEIHTLDFIYNEDMICWIESRESSNQLKCIQITKAGGLTDEWTINILQSFHNVQQMAIDWLTRNLYFVDHVGDRIFVCNSNGSVCVTLIDLELHNPKAIAVDPIAGKLFFTDYGNVAKVERCDMDGMNRTRIIDSKTEQPAALALDLVNKLVYWVDLYLDYVGVVDYQGKNRHTVIQGRQVRHLYGITVFEDYLYATNSDNYNIVRINRFNGTDIHSLIKIENAWGIRIYQKRTQPTVRSHACEVDPYGMPGGCSHICLLSSSYKTRTCRCRTGFNLGSDGRSCKRPKNELFLFYGKGRPGIVRGMDLNTKIADEYMIPIENLVNPRALDFHAETNYIYFADTTSFLIGRQKIDGTERETILKDDLDNVEGIAVDWIGNNLYWTNDGHRKTINVARLEKASQSRKTLLEGEMSHPRGIVVDPVNGWMYWTDWEEDEIDDSVGRIEKAWMDGFNRQIFVTSKMLWPNGLTLDFHTNTLYWCDAYYDHIEKVFLNGTHRKIVYSGRELNHPFGLSHHGNYVFWTDYMNGSIFQLDLITSEVTLLRHERPPLFGLQIYDPRKQQGDNMCRVNNGGCSTLCLAIPGGRVCACADNQLLDENGTTCTFNPGEALPHICKAGEFRCKNRHCIQARWKCDGDDDCLDGSDEDSVNCFNHSCPDDQFKCQNNRCIPKRWLCDGANDCGSNEDESNQTCTARTCQVDQFSCGNGRCIPRAWLCDREDDCGDQTDEMASCEFPTCEPLTQFVCKSGRCISSKWHCDSDDDCGDGSDEVGCVHSCFDNQFRCSSGRCIPGHWACDGDNDCGDFSDEAQINCTKEEIHSPAGCNGNEFQCHPDGNCVPDLWRCDGEKDCEDGSDEKGCNGTIRLCDHKTKFSCWSTGRCINKAWVCDGDIDCEDQSDEDDCDSFLCGPPKHPCANDTSVCLQPEKLCNGKKDCPDGSDEGYLCDECSLNNGGCSNHCSVVPGRGIVCSCPEGLQLNKDNKTCEIVDYCSNHLKCSQVCEQHKHTVKCSCYEGWKLDVDGESCTSVDPFEAFIIFSIRHEIRRIDLHKRDYSLLVPGLRNTIALDFHFNQSLLYWTDVVEDRIYRGKLSESGGVSAIEVVVEHGLATPEGLTVDWIAGNIYWIDSNLDQIEVAKLDGSLRTTLIAGAMEHPRAIALDPRYGILFWTDWDANFPRIESASMSGAGRKTIYKDMKTGAWPNGLTVDHFEKRIVWTDARSDAIYSALYDGTNMIEIIRGHEYLSHPFAVSLYGSEVYWTDWRTNTLSKANKWTGQNVSVIQKTSAQPFDLQIYHPSRQPQAPNPCAANDGKGPCSHMCLINHNRSAACACPHLMKLSSDKKTCYEMKKFLLYARRSEIRGVDIDNPYFNFITAFTVPDIDDVTVIDFDASEERLYWTDIKTQTIKRAFINGTGLETVISRDIQSIRGLAVDWVSRNLYWISSEFDETQINVARLDGSLKTSIIHGIDKPQCLAAHPVRGKLYWTDGNTINMANMDGSNSKILFQNQKEPVGLSIDYVENKLYWISSGNGTINRCNLDGGNLEVIESMKEELTKATALTIMDKKLWWADQNLAQLGTCSKRDGRNPTILRNKTSGVVHMKVYDKEAQQGSNSCQLNNGGCSQLCLPTSETTRTCMCTVGYYLQKNRMSCQGIESFLMYSVHEGIRGIPLEPSDKMDALMPISGTSFAVGIDFHAENDTIYWTDMGFNKISRAKRDQTWKEDIITNGLGRVEGIAVDWIAGNIYWTDHGFNLIEVARLNGSFRYVIISQGLDQPRSIAVHPEKGLLFWTEWGQMPCIGKARLDGSEKVVLVSMGIAWPNGISIDYEENKLYWCDARTDKIERIDLETGGNREMVLSGSNVDMFSVAVFGAYIYWSDRAHANGSVRRGHKNDATETITMRTGLGVNLKEVKIFNRVREKGTNVCARDNGGCKQLCLYRGNSRRTCACAHGYLAEDGVTCLRHEGYLLYSGRTILKSIHLSDETNLNSPIRPYENPRYFKNVIALAFDYNQRRKGTNRIFYSDAHFGNIQLIKDNWEDRQVIVENVGSVEGLAYHRAWDTLYWTSSTTSSITRHTVDQTRPGAFDREAVITMSEDDHPHVLALDECQNLMFWTNWNEQHPSIMRSTLTGKNAQVVVSTDILTPNGLTIDYRAEKLYFSDGSLGKIERCEYDGSQRHVIVKSGPGTFLSLAVYDNYIFWSDWGRRAILRSNKYTGGDTKILRSDIPHQPMGIIAVANDTNSCELSPCALLNGGCHDLCLLTPNGRVNCSCRGDRILLEDNRCVTKNSSCNAYSEFECGNGECIDYQLTCDGIPHCKDKSDEKLLYCENRSCRRGFKPCYNRRCIPHGKLCDGENDCGDNSDELDCKVSTCATVEFRCADGTCIPRSARCNQNIDCADASDEKNCNNTDCTHFYKLGVKTTGFIRCNSTSLCVLPTWICDGSNDCGDYSDELKCPVQNKHKCEENYFSCPSGRCILNTWICDGQKDCEDGRDEFHCDSSCSWNQFACSAQKCISKHWICDGEDDCGDGLDESDSICGAITCAADMFSCQGSRACVPRHWLCDGERDCPDGSDELSTAGCAPNNTCDENAFMCHNKVCIPKQFVCDHDDDCGDGSDESPQCGYRQCGTEEFSCADGRCLLNTQWQCDGDFDCPDHSDEAPLNPKCKSAEQSCNSSFFMCKNGRCIPSGGLCDNKDDCGDGSDERNCHINECLSKKVSGCSQDCQDLPVSYKCKCWPGFQLKDDGKTCVDIDECSSGFPCSQQCINTYGTYKCLCTDGYEIQPDNPNGCKSLSDEEPFLILADHHEIRKISTDGSNYTLLKQGLNNVIAIDFDYREEFIYWIDSSRPNGSRINRMCLNGSDIKVVHNTAVPNALAVDWIGKNLYWSDTEKRIIEVSKLNGLYPTILVSKRLKFPRDLSLDPQAGYLYWIDCCEYPHIGRVGMDGTNQSVVIETKISRPMALTIDYVNRRLYWADENHIEFSNMDGSHRHKVPNQDIPGVIALTLFEDYIYWTDGKTKSLSRAHKTSGADRLSLIYSWHAITDIQVYHSYRQPDVSKHLCMINNGGCSHLCLLAPGKTHTCACPTNFYLAADNRTCLSNCTASQFRCKTDKCIPFWWKCDTVDDCGDGSDEPDDCPEFRCQPGRFQCGTGLCALPAFICDGENDCGDNSDELNCDTHVCLSGQFKCTKNQKCIPVNLRCNGQDDCGDEEDERDCPENSCSPDYFQCKTTKHCISKLWVCDEDPDCADASDEANCDKKTCGPHEFQCKNNNCIPDHWRCDSQNDCSDNSDEENCKPQTCTLKDFLCANGDCVSSRFWCDGDFDCADGSDERNCETSCSKDQFRCSNGQCIPAKWKCDGHEDCKYGEDEKSCEPASPTCSSREYICASDGCISASLKCNGEYDCADGSDEMDCVTECKEDQFRCKNKAHCIPIRWLCDGIHDCVDGSDEENCERGGNICRADEFLCNNSLCKLHFWVCDGEDDCGDNSDEAPDMCVKFLCPSTRPHRCRNNRICLQSEQMCNGIDECGDNSDEDHCGGKLTYKARPCKKDEFACSNKKCIPMDLQCDRLDDCGDGSDEQGCRIAPTEYTCEDNVNPCGDDAYCNQIKTSVFCRCKPGFQRNMKNRQCEDLNECLVFGTCSHQCINVEGSYKCVCDQNFQERNNTCIAEGSEDQVLYIANDTDILGFIYPFNYSGDHQQISHIEHNSRITGMDVYYQRDMIIWSTQFNPGGIFYKRIHGREKRQANSGLICPEFKRPRDIAVDWVAGNIYWTDHSRMHWFSYYTTHWTSLRYSINVGQLNGPNCTRLLTNMAGEPYAIAVNPKRGMMYWTVVGDHSHIEEAAMDGTLRRILVQKNLQRPTGLAVDYFSERIYWADFELSIIGSVLYDGSNSVVSVSSKQGLLHPHRIDIFEDYIYGAGPKNGVFRVQKFGHGSVEYLALNIDKTKGVLISHRYKQLDLPNPCLDLACEFLCLLNPSGATCVCPEGKYLINGTCNDDSLLDDSCKLTCENGGRCILNEKGDLRCHCWPSYSGERCEVNHCSNYCQNGGTCVPSVLGRPTCSCALGFTGPNCGKTVCEDFCQNGGTCIVTAGNQPYCHCQPEYTGDRCQYYVCHHYCVNSESCTIGDDGSVECVCPTRYEGPKCEVDKCVRCHGGHCIINKDSEDIFCNCTNGKIASSCQLCDGYCYNGGTCQLDPETNVPVCLCSTNWSGTQCERPAPKSSKSDHISTRSIAIIVPLVLLVTLITTLVIGLVLCKRKRRTKTIRRQPIINGGINVEIGNPSYNMYEVDHDHNDGGLLDPGFMIDPTKARYIGGGPSAFKLPHTAPPIYLNSDLKGPLTAGPTNYSNPVYAKLYMDGQNCRNSLGSVDERKELLPKKIEIGIRETVA.

The signal sequence occupies residues 1–20 (MSEFLLALLTLSGLLPIARV). Residues 25–4444 (ADRDQQLCDP…KSDHISTRSI (4420 aa)) lie on the Extracellular side of the membrane. LDL-receptor class A domains lie at 31–70 (LCDPGEFLCHDHVTCVSQSWLCDGDPDCPDDSDESLDTCP) and 76–114 (KCPLNHIACLGTNKCVHLSQLCNGVLDCPDGYDEGVHCQ). Cystine bridges form between Cys32-Cys45, Cys39-Cys58, Cys52-Cys69, Cys77-Cys90, Cys84-Cys103, Cys97-Cys113, Cys120-Cys129, Cys125-Cys138, Cys140-Cys153, Cys159-Cys169, Cys165-Cys178, and Cys180-Cys193. An EGF-like 1 domain is found at 116-154 (LLSNCQQLNCQYKCTMVRNSTRCYCEDGFEITEDGRSCK). The N-linked (GlcNAc...) asparagine glycan is linked to Asn134. The region spanning 155–194 (DQDECAVYGTCSQTCRNTHGSYTCSCVEGYLMQPDNRSCK) is the EGF-like 2; calcium-binding domain. N-linked (GlcNAc...) asparagine glycosylation is found at Asn190, Asn220, Asn313, and Asn360. LDL-receptor class B repeat units lie at residues 295-337 (RNLY…DPIA), 338-381 (GKLF…DLVN), and 382-425 (KLVY…FEDY). N-linked (GlcNAc...) asparagine glycosylation occurs at Asn443. An EGF-like 3 domain is found at 471–517 (RSHACEVDPYGMPGGCSHICLLSSSYKTRTCRCRTGFNLGSDGRSCK). LDL-receptor class B repeat units follow at residues 568-610 (NYIY…DWIG), 611-656 (NNLY…DPVN), 657-706 (GWMY…DFHT), and 707-750 (NTLY…HGNY). N-linked (GlcNAc...) asparagine glycans are attached at residues Asn725 and Asn758. One can recognise an EGF-like 4 domain in the interval 794–834 (GDNMCRVNNGGCSTLCLAIPGGRVCACADNQLLDENGTTCT). Disulfide bonds link Cys798-Cys809, Cys805-Cys818, Cys820-Cys833, Cys845-Cys857, Cys852-Cys870, and Cys864-Cys881. A glycan (N-linked (GlcNAc...) asparagine) is linked at Asn829. Positions 844–882 (ICKAGEFRCKNRHCIQARWKCDGDDDCLDGSDEDSVNCF) constitute an LDL-receptor class A 3 domain. Asn883 carries N-linked (GlcNAc...) asparagine glycosylation. 7 LDL-receptor class A domains span residues 885–923 (SCPDDQFKCQNNRCIPKRWLCDGANDCGSNEDESNQTCT), 926–963 (TCQVDQFSCGNGRCIPRAWLCDREDDCGDQTDEMASCE), 966–1003 (TCEPLTQFVCKSGRCISSKWHCDSDDDCGDGSDEVGCV), 1005–1043 (SCFDNQFRCSSGRCIPGHWACDGDNDCGDFSDEAQINCT), 1052–1089 (GCNGNEFQCHPDGNCVPDLWRCDGEKDCEDGSDEKGCN), 1094–1132 (LCDHKTKFSCWSTGRCINKAWVCDGDIDCEDQSDEDDCD), and 1135–1174 (LCGPPKHPCANDTSVCLQPEKLCNGKKDCPDGSDEGYLCD). 15 cysteine pairs are disulfide-bonded: Cys886–Cys898, Cys893–Cys911, Cys905–Cys922, Cys927–Cys939, Cys934–Cys952, Cys946–Cys962, Cys967–Cys980, Cys975–Cys993, Cys987–Cys1002, Cys1006–Cys1018, Cys1013–Cys1031, Cys1025–Cys1042, Cys1053–Cys1066, Cys1060–Cys1079, and Cys1073–Cys1088. The N-linked (GlcNAc...) asparagine glycan is linked to Asn919. N-linked (GlcNAc...) asparagine glycosylation occurs at Asn1041. A glycan (N-linked (GlcNAc...) asparagine) is linked at Asn1089. Disulfide bonds link Cys1095–Cys1109, Cys1103–Cys1122, Cys1116–Cys1131, Cys1136–Cys1150, Cys1143–Cys1163, and Cys1157–Cys1173. Asn1145 carries N-linked (GlcNAc...) asparagine glycosylation. EGF-like domains are found at residues 1174-1213 (DECSLNNGGCSNHCSVVPGRGIVCSCPEGLQLNKDNKTCE) and 1214-1253 (IVDYCSNHLKCSQVCEQHKHTVKCSCYEGWKLDVDGESCT). The N-linked (GlcNAc...) asparagine glycan is linked to Asn1209. The N-linked (GlcNAc...) asparagine glycan is linked to Asn1298. 5 LDL-receptor class B repeats span residues 1300–1346 (SLLY…DWIA), 1347–1389 (GNIY…DPRY), 1390–1436 (GILF…DHFE), 1437–1480 (KRIV…LYGS), and 1481–1522 (EVYW…YHPS). N-linked (GlcNAc...) asparagine glycans are attached at residues Asn1502, Asn1549, and Asn1636. In terms of domain architecture, EGF-like 7 spans 1527–1570 (APNPCAANDGKGPCSHMCLINHNRSAACACPHLMKLSSDKKTCY). LDL-receptor class B repeat units follow at residues 1618–1660 (ERLY…DWVS), 1661–1704 (RNLY…HPVR), 1705–1744 (GKLYWTDGNTINMANMDGSNSKILFQNQKEPVGLSIDYVE), and 1745–1787 (NKLY…TIMD). Asn1754 and Asn1816 each carry an N-linked (GlcNAc...) asparagine glycan. In terms of domain architecture, EGF-like 8 spans 1834-1875 (GSNSCQLNNGGCSQLCLPTSETTRTCMCTVGYYLQKNRMSCQ). Disulfide bonds link Cys1838–Cys1849, Cys1845–Cys1859, and Cys1861–Cys1874. Asn1921 is a glycosylation site (N-linked (GlcNAc...) asparagine). LDL-receptor class B repeat units follow at residues 1922-1964 (DTIY…DWIA), 1965-2007 (GNIY…HPEK), 2008-2051 (GLLF…DYEE), and 2052-2095 (NKLY…FGAY). Asn1983 carries an N-linked (GlcNAc...) asparagine glycan. Asn2105 carries an N-linked (GlcNAc...) asparagine glycan. Positions 2143 to 2183 (GTNVCARDNGGCKQLCLYRGNSRRTCACAHGYLAEDGVTCL) constitute an EGF-like 9 domain. 3 cysteine pairs are disulfide-bonded: Cys2147-Cys2158, Cys2154-Cys2168, and Cys2170-Cys2182. LDL-receptor class B repeat units lie at residues 2239–2280 (NRIF…HRAW), 2281–2329 (DTLY…DECQ), 2330–2374 (NLMF…DYRA), 2375–2416 (EKLY…VYDN), and 2417–2459 (YIFW…VAND). N-linked (GlcNAc...) asparagine glycans are attached at residues Asn2458, Asn2488, and Asn2507. An EGF-like 10 domain is found at 2464 to 2504 (ELSPCALLNGGCHDLCLLTPNGRVNCSCRGDRILLEDNRCV). One can recognise an LDL-receptor class A 11 domain in the interval 2509-2548 (SCNAYSEFECGNGECIDYQLTCDGIPHCKDKSDEKLLYCE). 3 disulfides stabilise this stretch: Cys2510–Cys2523, Cys2518–Cys2536, and Cys2530–Cys2547. N-linked (GlcNAc...) asparagine glycosylation is present at Asn2549. 6 consecutive LDL-receptor class A domains span residues 2551 to 2587 (SCRRGFKPCYNRRCIPHGKLCDGENDCGDNSDELDCK), 2590 to 2626 (TCATVEFRCADGTCIPRSARCNQNIDCADASDEKNCN), 2629 to 2675 (DCTH…LKCP), 2681 to 2717 (KCEENYFSCPSGRCILNTWICDGQKDCEDGRDEFHCD), 2719 to 2757 (SCSWNQFACSAQKCISKHWICDGEDDCGDGLDESDSICG), and 2760 to 2800 (TCAA…AGCA). 6 disulfide bridges follow: Cys2552–Cys2564, Cys2559–Cys2577, Cys2571–Cys2586, Cys2591–Cys2603, Cys2598–Cys2616, and Cys2610–Cys2625. Residues Asn2626 and Asn2647 are each glycosylated (N-linked (GlcNAc...) asparagine). Cystine bridges form between Cys2630-Cys2652, Cys2646-Cys2665, Cys2659-Cys2674, Cys2682-Cys2694, Cys2689-Cys2707, Cys2701-Cys2716, Cys2720-Cys2732, Cys2727-Cys2745, Cys2739-Cys2756, Cys2761-Cys2774, Cys2768-Cys2787, and Cys2781-Cys2799. The N-linked (GlcNAc...) asparagine glycan is linked to Asn2802. LDL-receptor class A domains follow at residues 2804-2841 (TCDENAFMCHNKVCIPKQFVCDHDDDCGDGSDESPQCG), 2844-2885 (QCGT…PKCK), and 2890-2926 (SCNSSFFMCKNGRCIPSGGLCDNKDDCGDGSDERNCH). 15 cysteine pairs are disulfide-bonded: Cys2805–Cys2817, Cys2812–Cys2830, Cys2824–Cys2840, Cys2845–Cys2857, Cys2852–Cys2871, Cys2865–Cys2884, Cys2891–Cys2903, Cys2898–Cys2916, Cys2910–Cys2925, Cys2930–Cys2942, Cys2938–Cys2951, Cys2953–Cys2966, Cys2972–Cys2982, Cys2978–Cys2991, and Cys2993–Cys3007. N-linked (GlcNAc...) asparagine glycosylation is present at Asn2892. The EGF-like 11 domain occupies 2927–2967 (INECLSKKVSGCSQDCQDLPVSYKCKCWPGFQLKDDGKTCV). The region spanning 2968 to 3008 (DIDECSSGFPCSQQCINTYGTYKCLCTDGYEIQPDNPNGCK) is the EGF-like 12; calcium-binding domain. 3 N-linked (GlcNAc...) asparagine glycosylation sites follow: Asn3034, Asn3066, and Asn3076. LDL-receptor class B repeat units lie at residues 3055 to 3098 (EFIY…DWIG), 3099 to 3141 (KNLY…DPQA), 3142 to 3185 (GYLY…DYVN), 3186 to 3224 (RRLYWADENHIEFSNMDGSHRHKVPNQDIPGVIALTLFE), and 3225 to 3268 (DYIY…HSYR). Asn3164 carries N-linked (GlcNAc...) asparagine glycosylation. Residues 3273–3314 (SKHLCMINNGGCSHLCLLAPGKTHTCACPTNFYLAADNRTCL) form the EGF-like 13 domain. N-linked (GlcNAc...) asparagine glycans are attached at residues Asn3310 and Asn3316. LDL-receptor class A domains lie at 3316–3353 (NCTASQFRCKTDKCIPFWWKCDTVDDCGDGSDEPDDCP), 3356–3392 (RCQPGRFQCGTGLCALPAFICDGENDCGDNSDELNCD), 3395–3432 (VCLSGQFKCTKNQKCIPVNLRCNGQDDCGDEEDERDCP), 3435–3472 (SCSPDYFQCKTTKHCISKLWVCDEDPDCADASDEANCD), 3475–3511 (TCGPHEFQCKNNNCIPDHWRCDSQNDCSDNSDEENCK), 3514–3550 (TCTLKDFLCANGDCVSSRFWCDGDFDCADGSDERNCE), 3552–3588 (SCSKDQFRCSNGQCIPAKWKCDGHEDCKYGEDEKSCE), 3593–3629 (TCSSREYICASDGCISASLKCNGEYDCADGSDEMDCV), 3631–3668 (ECKEDQFRCKNKAHCIPIRWLCDGIHDCVDGSDEENCE), 3673–3711 (ICRADEFLCNNSLCKLHFWVCDGEDDCGDNSDEAPDMCV), 3714–3752 (LCPSTRPHRCRNNRICLQSEQMCNGIDECGDNSDEDHCG), and 3761–3797 (PCKKDEFACSNKKCIPMDLQCDRLDDCGDGSDEQGCR). Disulfide bonds link Cys3317/Cys3329, Cys3324/Cys3342, Cys3336/Cys3352, Cys3357/Cys3369, Cys3364/Cys3382, Cys3376/Cys3391, Cys3396/Cys3409, Cys3403/Cys3422, Cys3416/Cys3431, Cys3436/Cys3449, Cys3443/Cys3462, Cys3456/Cys3471, Cys3476/Cys3488, Cys3483/Cys3501, Cys3495/Cys3510, Cys3515/Cys3527, Cys3522/Cys3540, Cys3534/Cys3549, Cys3553/Cys3565, Cys3560/Cys3578, Cys3572/Cys3587, Cys3594/Cys3606, Cys3601/Cys3619, Cys3613/Cys3628, Cys3632/Cys3645, Cys3639/Cys3658, Cys3652/Cys3667, Cys3674/Cys3686, Cys3681/Cys3699, Cys3693/Cys3710, Cys3715/Cys3729, Cys3723/Cys3742, Cys3736/Cys3751, Cys3762/Cys3774, Cys3769/Cys3787, Cys3781/Cys3796, Cys3805/Cys3818, Cys3812/Cys3827, Cys3829/Cys3842, Cys3848/Cys3858, Cys3854/Cys3867, and Cys3869/Cys3880. The N-linked (GlcNAc...) asparagine glycan is linked to Asn3682. EGF-like domains lie at 3801–3843 (TEYT…RQCE) and 3844–3881 (DLNECLVFGTCSHQCINVEGSYKCVCDQNFQERNNTCI). Asn3877, Asn3894, and Asn3906 each carry an N-linked (GlcNAc...) asparagine glycan. LDL-receptor class B repeat units follow at residues 3933–3980 (DMII…DWVA), 3981–4038 (GNIY…NPKR), 4039–4082 (GMMY…DYFS), and 4083–4127 (ERIY…FEDY). The N-linked (GlcNAc...) asparagine glycan is linked to Asn4017. EGF-like domains lie at 4171–4208 (DLPNPCLDLACEFLCLLNPSGATCVCPEGKYLINGTCN), 4213–4249 (LDDSCKLTCENGGRCILNEKGDLRCHCWPSYSGERCE), 4249–4285 (EVNHCSNYCQNGGTCVPSVLGRPTCSCALGFTGPNCG), 4285–4321 (GKTVCEDFCQNGGTCIVTAGNQPYCHCQPEYTGDRCQ), 4321–4357 (QYYVCHHYCVNSESCTIGDDGSVECVCPTRYEGPKCE), 4357–4392 (EVDKCVRCHGGHCIINKDSEDIFCNCTNGKIASSCQ), and 4390–4427 (SCQLCDGYCYNGGTCQLDPETNVPVCLCSTNWSGTQCE). An N-linked (GlcNAc...) asparagine glycan is attached at Asn4204. Cystine bridges form between Cys4217–Cys4227, Cys4221–Cys4237, Cys4253–Cys4263, Cys4257–Cys4273, Cys4275–Cys4284, Cys4289–Cys4299, Cys4293–Cys4309, Cys4311–Cys4320, Cys4325–Cys4335, Cys4329–Cys4345, and Cys4347–Cys4356. Asn4381 carries an N-linked (GlcNAc...) asparagine glycan. 3 disulfide bridges follow: Cys4394–Cys4404, Cys4398–Cys4415, and Cys4417–Cys4426. An N-linked (GlcNAc...) asparagine glycan is attached at Asn4420. The helical transmembrane segment at 4445 to 4467 (AIIVPLVLLVTLITTLVIGLVLC) threads the bilayer. Residues 4468-4599 (KRKRRTKTIR…IEIGIRETVA (132 aa)) lie on the Cytoplasmic side of the membrane. Short sequence motifs (endocytosis signal) lie at residues 4492-4495 (NPSY) and 4559-4562 (NPVY).

It belongs to the LDLR family. Binds LRPAP1, PLAU, PLAT and SERPINE1; binding is followed by internalization and degradation of the ligands. In terms of tissue distribution, expressed in thyroid gland and in salivary gland, as well as in adult and fetal brain.

It localises to the membrane. Functionally, potential cell surface proteins that bind and internalize ligands in the process of receptor-mediated endocytosis. In Homo sapiens (Human), this protein is Low-density lipoprotein receptor-related protein 1B (LRP1B).